Here is a 249-residue protein sequence, read N- to C-terminus: MLQLRFMPGWVPRNGFFGLKETIGTVHKRFYALASEQPSRKTVKPLDSRKTFLIDTYKHLMENSSMIFFVHYNNLSKTEDHHFRFKIKQTGGKLTKVRNNLFEVYLRNSHLPDPCGFVKRKEQNWKHPLLPLLKGPTATITYEDTNPQQVAKLLKVLQSAQDKLMVIGAKVENEVLNVEKINTFKTLPTKPEMQSQLVSVLQMLSGLGLVRTLENSSNALYLTLKSHNDNQKPKEDVESTTDAESKGSK.

A mitochondrion-targeting transit peptide spans 1 to 31; sequence MLQLRFMPGWVPRNGFFGLKETIGTVHKRFY. The tract at residues 226–249 is disordered; it reads SHNDNQKPKEDVESTTDAESKGSK.

Belongs to the universal ribosomal protein uL10 family. As to quaternary structure, component of the mitochondrial large ribosomal subunit (mt-LSU). Mature yeast 74S mitochondrial ribosomes consist of a small (37S) and a large (54S) subunit. The 37S small subunit contains a 15S ribosomal RNA (15S mt-rRNA) and 34 different proteins. The 54S large subunit contains a 21S rRNA (21S mt-rRNA) and 46 different proteins.

It localises to the mitochondrion. Component of the mitochondrial ribosome (mitoribosome), a dedicated translation machinery responsible for the synthesis of mitochondrial genome-encoded proteins, including at least some of the essential transmembrane subunits of the mitochondrial respiratory chain. The mitoribosomes are attached to the mitochondrial inner membrane and translation products are cotranslationally integrated into the membrane. This Saccharomyces cerevisiae (strain ATCC 204508 / S288c) (Baker's yeast) protein is Large ribosomal subunit protein uL10m (MRPL11).